The chain runs to 716 residues: Polyribonucleotide nucleotidyltransferase (716 aa).

Residues Asp485 and Asp491 each contribute to the Mg(2+) site. Positions Pro552 to Ile611 constitute a KH domain. In terms of domain architecture, S1 motif spans Gly621–Lys689. Over residues Lys689–Pro698 the composition is skewed to basic and acidic residues. Residues Lys689–Glu716 are disordered. Positions Ala707 to Glu716 are enriched in acidic residues.

This sequence belongs to the polyribonucleotide nucleotidyltransferase family. Component of the RNA degradosome, which is a multiprotein complex involved in RNA processing and mRNA degradation. The cofactor is Mg(2+).

It localises to the cytoplasm. The catalysed reaction is RNA(n+1) + phosphate = RNA(n) + a ribonucleoside 5'-diphosphate. In terms of biological role, involved in mRNA degradation. Catalyzes the phosphorolysis of single-stranded polyribonucleotides processively in the 3'- to 5'-direction. The chain is Polyribonucleotide nucleotidyltransferase from Idiomarina loihiensis (strain ATCC BAA-735 / DSM 15497 / L2-TR).